A 192-amino-acid polypeptide reads, in one-letter code: Spermatogenesis-associated protein 3 (192 aa).

Positions 1 to 15 (MKKVKKKRSEARRHR) are enriched in basic residues. Disordered stretches follow at residues 1–65 (MKKV…TTSR) and 161–184 (SRKPSSHRNACPPSPRNCGCGSGG). Residues 19 to 59 (SQHASSNSTSQQPSPESTPQQPSPESTPQQPSPESTPQHSS) show a composition bias toward low complexity.

It localises to the cell projection. Its subcellular location is the cilium. The protein resides in the flagellum. The sequence is that of Spermatogenesis-associated protein 3 (SPATA3) from Homo sapiens (Human).